Reading from the N-terminus, the 620-residue chain is Glutathione-regulated potassium-efflux system protein KefC (620 aa).

12 helical membrane-spanning segments follow: residues His4–Val24, Leu26–Leu46, Ser54–Leu74, Gly90–Leu110, Val114–Met134, Phe149–Leu169, Met178–Leu198, Val218–Gly238, Gly270–Ile290, Leu294–Ile314, Trp327–Gln347, and Ser359–Asn379. Positions Gln399–Thr518 constitute an RCK N-terminal domain. Positions Gly597–Ser620 are disordered.

The protein belongs to the monovalent cation:proton antiporter 2 (CPA2) transporter (TC 2.A.37) family. KefC subfamily. In terms of assembly, homodimer. Interacts with the regulatory subunit KefF.

The protein resides in the cell inner membrane. In terms of biological role, pore-forming subunit of a potassium efflux system that confers protection against electrophiles. Catalyzes K(+)/H(+) antiport. This Shigella flexneri serotype 5b (strain 8401) protein is Glutathione-regulated potassium-efflux system protein KefC.